The sequence spans 165 residues: Small ribosomal subunit protein uS5 (165 aa).

Residues 10–73 (LVEKLVAVDR…EAARRNMITV (64 aa)) form the S5 DRBM domain.

It belongs to the universal ribosomal protein uS5 family. Part of the 30S ribosomal subunit. Contacts proteins S4 and S8.

In terms of biological role, with S4 and S12 plays an important role in translational accuracy. Its function is as follows. Located at the back of the 30S subunit body where it stabilizes the conformation of the head with respect to the body. The sequence is that of Small ribosomal subunit protein uS5 from Acinetobacter baumannii (strain AB307-0294).